The sequence spans 986 residues: Translation initiation factor IF-2 (986 aa).

Residues 49–59 (EFAKDNAKGDS) show a composition bias toward basic and acidic residues. The tract at residues 49 to 370 (EFAKDNAKGD…KNRLAKRHEY (322 aa)) is disordered. Residues 60–112 (KPASSAQKPAAKPVQQRRPAAPSAPASTSSSAPTPAAPARQASPASAHQQAPT) are compositionally biased toward low complexity. Basic and acidic residues predominate over residues 135 to 168 (GQHDNRENGRDNREGRENGRQSRPNDRRNNDRRN). Residues 170–182 (QGRPNNGQPGQHQ) show a composition bias toward low complexity. 2 stretches are compositionally biased toward gly residues: residues 254 to 286 (GRGG…GGPR) and 296 to 353 (GQGG…GRQG). Basic residues predominate over residues 357-366 (SKARKNRLAK). One can recognise a tr-type G domain in the interval 479–651 (PRPPVVTVMG…VLLTADAELD (173 aa)). Positions 488-495 (GHVDHGKT) are G1. 488–495 (GHVDHGKT) lines the GTP pocket. A G2 region spans residues 513 to 517 (GITQR). The G3 stretch occupies residues 538 to 541 (DTPG). Residues 538–542 (DTPGH) and 592–595 (NKID) contribute to the GTP site. Residues 592–595 (NKID) form a G4 region. The interval 628 to 630 (SAK) is G5.

This sequence belongs to the TRAFAC class translation factor GTPase superfamily. Classic translation factor GTPase family. IF-2 subfamily.

It is found in the cytoplasm. One of the essential components for the initiation of protein synthesis. Protects formylmethionyl-tRNA from spontaneous hydrolysis and promotes its binding to the 30S ribosomal subunits. Also involved in the hydrolysis of GTP during the formation of the 70S ribosomal complex. This Bifidobacterium longum subsp. infantis (strain ATCC 15697 / DSM 20088 / JCM 1222 / NCTC 11817 / S12) protein is Translation initiation factor IF-2.